The primary structure comprises 396 residues: Formate-dependent phosphoribosylglycinamide formyltransferase (396 aa).

Residues E24–L25 and E84 contribute to the N(1)-(5-phospho-beta-D-ribosyl)glycinamide site. Residues R116, K157, S162–Q167, E197–V200, and E205 contribute to the ATP site. Residues R121–L310 form the ATP-grasp domain. Mg(2+) contacts are provided by E269 and E281. N(1)-(5-phospho-beta-D-ribosyl)glycinamide is bound by residues D288, K359, and R366–R367.

This sequence belongs to the PurK/PurT family. Homodimer.

It carries out the reaction N(1)-(5-phospho-beta-D-ribosyl)glycinamide + formate + ATP = N(2)-formyl-N(1)-(5-phospho-beta-D-ribosyl)glycinamide + ADP + phosphate + H(+). The protein operates within purine metabolism; IMP biosynthesis via de novo pathway; N(2)-formyl-N(1)-(5-phospho-D-ribosyl)glycinamide from N(1)-(5-phospho-D-ribosyl)glycinamide (formate route): step 1/1. Involved in the de novo purine biosynthesis. Catalyzes the transfer of formate to 5-phospho-ribosyl-glycinamide (GAR), producing 5-phospho-ribosyl-N-formylglycinamide (FGAR). Formate is provided by PurU via hydrolysis of 10-formyl-tetrahydrofolate. This is Formate-dependent phosphoribosylglycinamide formyltransferase from Psychromonas ingrahamii (strain DSM 17664 / CCUG 51855 / 37).